The primary structure comprises 389 residues: LL-diaminopimelate aminotransferase (389 aa).

The substrate site is built by Y13 and G38. Residues Y67, 101–102, Y126, N176, Y207, and 235–237 each bind pyridoxal 5'-phosphate; these read SK and SLS. 3 residues coordinate substrate: K102, Y126, and N176. K238 bears the N6-(pyridoxal phosphate)lysine mark. Residue R246 participates in pyridoxal 5'-phosphate binding. Substrate is bound at residue R364.

This sequence belongs to the class-I pyridoxal-phosphate-dependent aminotransferase family. LL-diaminopimelate aminotransferase subfamily. As to quaternary structure, homodimer. The cofactor is pyridoxal 5'-phosphate.

It catalyses the reaction (2S,6S)-2,6-diaminopimelate + 2-oxoglutarate = (S)-2,3,4,5-tetrahydrodipicolinate + L-glutamate + H2O + H(+). It participates in amino-acid biosynthesis; L-lysine biosynthesis via DAP pathway; LL-2,6-diaminopimelate from (S)-tetrahydrodipicolinate (aminotransferase route): step 1/1. Involved in the synthesis of meso-diaminopimelate (m-DAP or DL-DAP), required for both lysine and peptidoglycan biosynthesis. Catalyzes the direct conversion of tetrahydrodipicolinate to LL-diaminopimelate. The protein is LL-diaminopimelate aminotransferase of Halothermothrix orenii (strain H 168 / OCM 544 / DSM 9562).